Reading from the N-terminus, the 347-residue chain is Aspartate-semialdehyde dehydrogenase (347 aa).

NADP(+) contacts are provided by residues 10 to 13 (TGMV) and 37 to 38 (RS). Arg-108 serves as a coordination point for phosphate. Cys-147 functions as the Acyl-thioester intermediate in the catalytic mechanism. Gln-174 lines the substrate pocket. 177–178 (SG) provides a ligand contact to NADP(+). Glu-200 lines the substrate pocket. Lys-203 contributes to the phosphate binding site. Substrate is bound at residue Arg-233. The Proton acceptor role is filled by His-240. The segment at 276 to 299 (APEKPVVVRDEENRPQPRMDRDMD) is disordered. Over residues 281–299 (VVVRDEENRPQPRMDRDMD) the composition is skewed to basic and acidic residues. An NADP(+)-binding site is contributed by 327-328 (NT).

This sequence belongs to the aspartate-semialdehyde dehydrogenase family. As to quaternary structure, homodimer.

It catalyses the reaction L-aspartate 4-semialdehyde + phosphate + NADP(+) = 4-phospho-L-aspartate + NADPH + H(+). It participates in amino-acid biosynthesis; L-lysine biosynthesis via DAP pathway; (S)-tetrahydrodipicolinate from L-aspartate: step 2/4. It functions in the pathway amino-acid biosynthesis; L-methionine biosynthesis via de novo pathway; L-homoserine from L-aspartate: step 2/3. Its pathway is amino-acid biosynthesis; L-threonine biosynthesis; L-threonine from L-aspartate: step 2/5. In terms of biological role, catalyzes the NADPH-dependent formation of L-aspartate-semialdehyde (L-ASA) by the reductive dephosphorylation of L-aspartyl-4-phosphate. This is Aspartate-semialdehyde dehydrogenase from Methanothermobacter thermautotrophicus (strain ATCC 29096 / DSM 1053 / JCM 10044 / NBRC 100330 / Delta H) (Methanobacterium thermoautotrophicum).